We begin with the raw amino-acid sequence, 107 residues long: Glutaredoxin 4 (107 aa).

In terms of domain architecture, Glutaredoxin spans 4-106 (IEKIERQIKD…KIISNAVLNS (103 aa)). Glutathione is bound at residue Lys-21. Position 29 (Cys-29) interacts with [2Fe-2S] cluster. Glutathione-binding positions include Arg-58, Phe-70, and 83–84 (CS).

This sequence belongs to the glutaredoxin family. Monothiol subfamily. Homodimer.

The protein localises to the cytoplasm. Functionally, monothiol glutaredoxin involved in the biogenesis of iron-sulfur clusters. The polypeptide is Glutaredoxin 4 (grxD) (Buchnera aphidicola subsp. Schizaphis graminum (strain Sg)).